A 480-amino-acid chain; its full sequence is ATP-dependent rRNA helicase RRP3 (480 aa).

Basic and acidic residues-rich tracts occupy residues 1–17 and 33–46; these read MAKA…KEES and DTTK…EPKK. The interval 1–63 is disordered; it reads MAKATEKRVK…VEVDESEEQT (63 aa). The Q motif signature appears at 64-92; sequence KTFKDLGVIDSICETCEELKFTKPTPIQA. One can recognise a Helicase ATP-binding domain in the interval 95–266; that stretch reads IPYALEGRDI…RASLVDPVRV (172 aa). Position 108–115 (108–115) interacts with ATP; sequence AQTGSGKT. The DEAD box signature appears at 214–217; sequence DEAD. A Helicase C-terminal domain is found at 277-437; the sequence is NLLQYMVFCP…SYPLESEAVM (161 aa). The disordered stretch occupies residues 450–480; sequence AIQEMKGEDGTKKRSKFDKKRRRDEMDIGEQ. A compositionally biased stretch (basic residues) spans 462–471; sequence KRSKFDKKRR.

It belongs to the DEAD box helicase family. DDX47/RRP3 subfamily. In terms of assembly, interacts with the SSU processome.

The protein localises to the nucleus. It catalyses the reaction ATP + H2O = ADP + phosphate + H(+). Its function is as follows. ATP-dependent rRNA helicase required for pre-ribosomal RNA processing. Involved in the maturation of the 35S-pre-rRNA and to its cleavage to mature 18S rRNA. The protein is ATP-dependent rRNA helicase RRP3 of Yarrowia lipolytica (strain CLIB 122 / E 150) (Yeast).